A 341-amino-acid chain; its full sequence is MRVGVLTGGGDCPGLNAVIRAVVRKGIEAHGWEIVGFRSGWRGPLTGDSRPLGLDDVEEILIRGGTILGSSRTNPYKEEGGVEKIRAVLADQGVDALIAIGGEDTLGVAKKLTDDGIGVVGVPKTIDNDLAATDYTFGFDTAVHIATEAIDRLRTTAESHYRAMVVEVMGRHAGWIALHAGLAGGANVILVPERPFSVEQVVEWVERRFEKMYAPIIVVAEGAVPEGGAEVLRTGEKDAFGHVQLGGVGTWLADEIAERTGKESRAVVLGHTQRGGTPTAYDRVLATRFGLHAVDAVADGDFGTMVALRGTDIVRVKLAEATAELKTVPPERYEEAEVFFG.

G10 serves as a coordination point for diphosphate. E103 contributes to the Mg(2+) binding site. Substrate-binding positions include 125 to 127 (TID), R162, 169 to 171 (MGR), E221, R265, and 271 to 274 (HTQR). The active-site Proton acceptor is D127.

This sequence belongs to the phosphofructokinase type A (PFKA) family. Mixed-substrate PFK group III subfamily. As to quaternary structure, homotetramer. Requires Mg(2+) as cofactor.

It is found in the cytoplasm. It carries out the reaction beta-D-fructose 6-phosphate + diphosphate = beta-D-fructose 1,6-bisphosphate + phosphate + H(+). Its pathway is carbohydrate degradation; glycolysis; D-glyceraldehyde 3-phosphate and glycerone phosphate from D-glucose: step 3/4. Non-allosteric. Its function is as follows. Catalyzes the phosphorylation of D-fructose 6-phosphate, the first committing step of glycolysis. Uses inorganic phosphate (PPi) as phosphoryl donor instead of ATP like common ATP-dependent phosphofructokinases (ATP-PFKs), which renders the reaction reversible, and can thus function both in glycolysis and gluconeogenesis. Consistently, PPi-PFK can replace the enzymes of both the forward (ATP-PFK) and reverse (fructose-bisphosphatase (FBPase)) reactions. This is Pyrophosphate--fructose 6-phosphate 1-phosphotransferase from Amycolatopsis methanolica.